The following is an 811-amino-acid chain: Receptor-like protein 46 (811 aa).

The N-terminal stretch at 1–21 is a signal peptide; the sequence is MSKQCLLSCFLFFCFFIPQLS. Over 22–782 the chain is Extracellular; it reads FSCPQDQRQS…EEEDKEEEET (761 aa). Residues asparagine 46, asparagine 71, asparagine 128, and asparagine 143 are each glycosylated (N-linked (GlcNAc...) asparagine). 24 LRR repeats span residues 104–128, 129–153, 155–177, 178–201, 203–225, 226–249, 251–273, 275–298, 299–322, 324–348, 349–369, 370–395, 397–419, 421–442, 443–466, 468–488, 490–510, 511–534, 536–560, 561–583, 643–665, 666–688, 690–713, and 714–738; these read INSL…AFVN, LTSL…LFSL, NLQR…IKEL, KNLQ…IGSL, ELLT…VSRL, TKLK…IGNL, NLST…IHNL, NLET…WLFG, LQKL…GYVF, QFKL…LKNQ, TALV…PKWL, ADLK…LFQR, SLYY…IGES, VMVL…ITKI, PFLK…RPES, LEWL…YFGG, TSML…NFRN, LSYL…LISQ, SSSV…ISNL, TSLK…SLGN, LYTL…LGNL, KSLK…SFGD, EKVE…LSKL, and SELN…QLDR. N-linked (GlcNAc...) asparagine glycosylation occurs at asparagine 215. Asparagine 251 is a glycosylation site (N-linked (GlcNAc...) asparagine). Residue asparagine 347 is glycosylated (N-linked (GlcNAc...) asparagine). N-linked (GlcNAc...) asparagine glycans are attached at residues asparagine 376, asparagine 407, and asparagine 430. N-linked (GlcNAc...) asparagine glycosylation is found at asparagine 499 and asparagine 510. 3 N-linked (GlcNAc...) asparagine glycosylation sites follow: asparagine 546, asparagine 559, and asparagine 583. 2 N-linked (GlcNAc...) asparagine glycosylation sites follow: asparagine 672 and asparagine 701. Residue asparagine 747 is glycosylated (N-linked (GlcNAc...) asparagine). A helical membrane pass occupies residues 783 to 803; that stretch reads IFSWNAAAIGCSCGFLIAVVF. Residues 804–811 lie on the Cytoplasmic side of the membrane; sequence MSYNELWK.

It belongs to the RLP family.

The protein resides in the cell membrane. This chain is Receptor-like protein 46, found in Arabidopsis thaliana (Mouse-ear cress).